We begin with the raw amino-acid sequence, 90 residues long: Probable small nuclear ribonucleoprotein E (90 aa).

A Sm domain is found at 14-89 (VNLIFRYLQN…ITLIHAAQQE (76 aa)).

The protein belongs to the snRNP Sm proteins family. In terms of assembly, core component of the spliceosomal U1, U2, U4 and U5 small nuclear ribonucleoproteins (snRNPs), the building blocks of the spliceosome.

The protein localises to the nucleus. Its subcellular location is the cytoplasm. It is found in the cytosol. Its function is as follows. Plays a role in pre-mRNA splicing as a core component of the spliceosomal U1, U2, U4 and U5 small nuclear ribonucleoproteins (snRNPs), the building blocks of the spliceosome. In Caenorhabditis elegans, this protein is Probable small nuclear ribonucleoprotein E (snr-6).